A 338-amino-acid polypeptide reads, in one-letter code: Ketol-acid reductoisomerase (NADP(+)) (338 aa).

A KARI N-terminal Rossmann domain is found at 1-181; the sequence is MKIYYDKDCN…GGGRAGIIET (181 aa). NADP(+)-binding positions include 24–27, Arg47, Ser50, Ser52, and 82–85; these read YGSQ and DETQ. His107 is an active-site residue. An NADP(+)-binding site is contributed by Gly133. In terms of domain architecture, KARI C-terminal knotted spans 182-327; the sequence is SFKEETETDL…ARLRSMMSWI (146 aa). Asp190, Glu194, Glu226, and Glu230 together coordinate Mg(2+). Position 251 (Ser251) interacts with substrate.

This sequence belongs to the ketol-acid reductoisomerase family. Mg(2+) serves as cofactor.

It catalyses the reaction (2R)-2,3-dihydroxy-3-methylbutanoate + NADP(+) = (2S)-2-acetolactate + NADPH + H(+). The enzyme catalyses (2R,3R)-2,3-dihydroxy-3-methylpentanoate + NADP(+) = (S)-2-ethyl-2-hydroxy-3-oxobutanoate + NADPH + H(+). Its pathway is amino-acid biosynthesis; L-isoleucine biosynthesis; L-isoleucine from 2-oxobutanoate: step 2/4. The protein operates within amino-acid biosynthesis; L-valine biosynthesis; L-valine from pyruvate: step 2/4. Functionally, involved in the biosynthesis of branched-chain amino acids (BCAA). Catalyzes an alkyl-migration followed by a ketol-acid reduction of (S)-2-acetolactate (S2AL) to yield (R)-2,3-dihydroxy-isovalerate. In the isomerase reaction, S2AL is rearranged via a Mg-dependent methyl migration to produce 3-hydroxy-3-methyl-2-ketobutyrate (HMKB). In the reductase reaction, this 2-ketoacid undergoes a metal-dependent reduction by NADPH to yield (R)-2,3-dihydroxy-isovalerate. The sequence is that of Ketol-acid reductoisomerase (NADP(+)) from Geobacter metallireducens (strain ATCC 53774 / DSM 7210 / GS-15).